The following is a 351-amino-acid chain: tRNA-specific 2-thiouridylase MnmA 2 (351 aa).

Residues 13 to 20 (GMSGGTDS) and phenylalanine 39 each bind ATP. Residue cysteine 98 is the Nucleophile of the active site. Cysteine 98 and cysteine 195 are disulfide-bonded. Position 122 (glycine 122) interacts with ATP. The tract at residues 144–146 (KDQ) is interaction with tRNA. The active-site Cysteine persulfide intermediate is the cysteine 195. Residues 301-302 (RY) are interaction with tRNA.

The protein belongs to the MnmA/TRMU family.

It localises to the cytoplasm. It catalyses the reaction S-sulfanyl-L-cysteinyl-[protein] + uridine(34) in tRNA + AH2 + ATP = 2-thiouridine(34) in tRNA + L-cysteinyl-[protein] + A + AMP + diphosphate + H(+). In terms of biological role, catalyzes the 2-thiolation of uridine at the wobble position (U34) of tRNA, leading to the formation of s(2)U34. The chain is tRNA-specific 2-thiouridylase MnmA 2 from Phocaeicola vulgatus (strain ATCC 8482 / DSM 1447 / JCM 5826 / CCUG 4940 / NBRC 14291 / NCTC 11154) (Bacteroides vulgatus).